A 307-amino-acid chain; its full sequence is tRNA pseudouridine synthase B (307 aa).

Asp48 functions as the Nucleophile in the catalytic mechanism.

It belongs to the pseudouridine synthase TruB family. Type 1 subfamily.

It catalyses the reaction uridine(55) in tRNA = pseudouridine(55) in tRNA. In terms of biological role, responsible for synthesis of pseudouridine from uracil-55 in the psi GC loop of transfer RNAs. The chain is tRNA pseudouridine synthase B from Neisseria meningitidis serogroup B (strain ATCC BAA-335 / MC58).